The primary structure comprises 211 residues: Small ribosomal subunit protein uS3 (211 aa).

The region spanning 38–106 (LRNFLKKRLY…EVYLNIQEVR (69 aa)) is the KH type-2 domain.

This sequence belongs to the universal ribosomal protein uS3 family. As to quaternary structure, part of the 30S ribosomal subunit. Forms a tight complex with proteins S10 and S14.

In terms of biological role, binds the lower part of the 30S subunit head. Binds mRNA in the 70S ribosome, positioning it for translation. In Geobacter sp. (strain M21), this protein is Small ribosomal subunit protein uS3.